A 182-amino-acid polypeptide reads, in one-letter code: Peptidoglycan recognition protein (182 aa).

Residues methionine 1 to glycine 16 form the signal peptide. Disulfide bonds link cysteine 18–cysteine 140 and cysteine 54–cysteine 60. The 128-residue stretch at arginine 39–glycine 166 folds into the N-acetylmuramoyl-L-alanine amidase domain.

It belongs to the N-acetylmuramoyl-L-alanine amidase 2 family. As to quaternary structure, monomer. In terms of tissue distribution, strongly expressed in fat body with weak expression observed in hemocyte. No expression detected in gut.

Binds specifically to peptidoglycan and triggers the propenoloxidase cascade which is an important insect innate immune defense mechanism. The chain is Peptidoglycan recognition protein (PGRP) from Trichoplusia ni (Cabbage looper).